The primary structure comprises 546 residues: Thermolysin (546 aa).

The N-terminal stretch at 1–25 is a signal peptide; sequence MDKRAMLGAIGLAFGLMAWPFGASA. Positions 26–228 are cleaved as a propeptide — activation peptide; that stretch reads KEKSMVWNEQ…EAKPGGGQPV (203 aa). The Ca(2+) site is built by Asp287, Asp289, Gln291, and Asp368. His372 serves as a coordination point for Zn(2+). Glu373 is an active-site residue. His376 and Glu396 together coordinate Zn(2+). Positions 413, 415, 417, 420, 423, 424, 427, and 430 each coordinate Ca(2+). His461 serves as the catalytic Proton donor.

This sequence belongs to the peptidase M4 family. It depends on Ca(2+) as a cofactor. The cofactor is Zn(2+).

It is found in the secreted. It carries out the reaction Preferential cleavage: Xaa-|-Leu &gt; Xaa-|-Phe.. Its function is as follows. Extracellular zinc metalloprotease. This is Thermolysin (npr) from Bacillus caldolyticus.